The chain runs to 555 residues: Transcription factor kojR (555 aa).

Positions 21-47 form a DNA-binding region, zn(2)-C6 fungal-type; that stretch reads CETCKLRKRKCDGHEPCTYCLRYEYQC. The tract at residues 51-73 is disordered; it reads PHPRRKPAASKSSARPSEEEDSP.

It localises to the nucleus. Transcription factor that regulates the gene cluster that mediates the biosynthesis of 5-hydroxy-2-hydroxymethyl-1,4-pyrone, also know as kojic acid, a by-product in the fermentation process of malting rice that acts as a chelation agent. Mediates the expression of kojA and kojT via binding of an 11-nucleotide palindromic sequence, 5'-CGRCTWAGYCG-3' (R=A/G, W=A/T, Y=C/T) within the target gene promoters. This Aspergillus flavus (strain ATCC 200026 / FGSC A1120 / IAM 13836 / NRRL 3357 / JCM 12722 / SRRC 167) protein is Transcription factor kojR.